The following is a 295-amino-acid chain: Methionine aminopeptidase (295 aa).

Position 63 (H63) interacts with substrate. Positions 83, 94, and 154 each coordinate a divalent metal cation. H162 contacts substrate. A divalent metal cation is bound by residues E188 and E281.

The protein belongs to the peptidase M24A family. Methionine aminopeptidase archaeal type 2 subfamily. In terms of assembly, monomer. The cofactor is Co(2+). Zn(2+) serves as cofactor. It depends on Mn(2+) as a cofactor. Requires Fe(2+) as cofactor.

It catalyses the reaction Release of N-terminal amino acids, preferentially methionine, from peptides and arylamides.. In terms of biological role, removes the N-terminal methionine from nascent proteins. The N-terminal methionine is often cleaved when the second residue in the primary sequence is small and uncharged (Met-Ala-, Cys, Gly, Pro, Ser, Thr, or Val). In Thermococcus kodakarensis (strain ATCC BAA-918 / JCM 12380 / KOD1) (Pyrococcus kodakaraensis (strain KOD1)), this protein is Methionine aminopeptidase.